Consider the following 436-residue polypeptide: GTPase Der (436 aa).

EngA-type G domains are found at residues 4-167 (SVVA…PNES) and 176-351 (IYFS…ESHT). GTP-binding positions include 10–17 (GRPNVGKS), 57–61 (DTGGI), 119–122 (NKMD), 182–189 (GRPNVGKS), 229–233 (DTAGM), and 294–297 (NKWD). Residues 352-436 (KRIPTNVLND…PIKLFARRRQ (85 aa)) form the KH-like domain.

Belongs to the TRAFAC class TrmE-Era-EngA-EngB-Septin-like GTPase superfamily. EngA (Der) GTPase family. As to quaternary structure, associates with the 50S ribosomal subunit.

GTPase that plays an essential role in the late steps of ribosome biogenesis. The chain is GTPase Der from Oceanobacillus iheyensis (strain DSM 14371 / CIP 107618 / JCM 11309 / KCTC 3954 / HTE831).